We begin with the raw amino-acid sequence, 460 residues long: Ribosomal protein uS12 methylthiotransferase RimO (460 aa).

One can recognise an MTTase N-terminal domain in the interval 18-134 (MKIHITSLGC…VTSIVAEVLR (117 aa)). [4Fe-4S] cluster is bound by residues Cys-27, Cys-63, Cys-97, Cys-171, Cys-175, and Cys-178. The region spanning 157-387 (STPFHYAYVK…MVLQQEISLS (231 aa)) is the Radical SAM core domain. Positions 390 to 456 (QEWIGKTLEV…HYDLMGEAID (67 aa)) constitute a TRAM domain.

Belongs to the methylthiotransferase family. RimO subfamily. It depends on [4Fe-4S] cluster as a cofactor.

The protein localises to the cytoplasm. It carries out the reaction L-aspartate(89)-[ribosomal protein uS12]-hydrogen + (sulfur carrier)-SH + AH2 + 2 S-adenosyl-L-methionine = 3-methylsulfanyl-L-aspartate(89)-[ribosomal protein uS12]-hydrogen + (sulfur carrier)-H + 5'-deoxyadenosine + L-methionine + A + S-adenosyl-L-homocysteine + 2 H(+). Functionally, catalyzes the methylthiolation of an aspartic acid residue of ribosomal protein uS12. The protein is Ribosomal protein uS12 methylthiotransferase RimO of Heliobacterium modesticaldum (strain ATCC 51547 / Ice1).